A 560-amino-acid chain; its full sequence is Excitatory amino acid transporter 5 (560 aa).

The Cytoplasmic segment spans residues Met1 to Arg16. 3 consecutive transmembrane segments (helical) span residues Asn17–Leu37, Met60–Leu80, and Ala94–Ile114. Over His115–Thr216 the chain is Extracellular. Asn191 carries an N-linked (GlcNAc...) asparagine glycan. 7 consecutive transmembrane segments (helical) span residues Ser217–Gly237, Ile260–Ile280, Val300–Thr320, Gly330–Ile350, Val372–Ile392, Ala414–Leu434, and Phe457–Cys477.

The protein belongs to the dicarboxylate/amino acid:cation symporter (DAACS) (TC 2.A.23) family. SLC1A7 subfamily. Interacts with the PDZ domains of DLG4. In terms of tissue distribution, expressed primarily in retina. Detectable in liver, heart, muscle and brain.

The protein resides in the photoreceptor inner segment membrane. It is found in the synaptic cell membrane. The catalysed reaction is K(+)(in) + L-glutamate(out) + 3 Na(+)(out) + H(+)(out) = K(+)(out) + L-glutamate(in) + 3 Na(+)(in) + H(+)(in). The enzyme catalyses K(+)(in) + L-aspartate(out) + 3 Na(+)(out) + H(+)(out) = K(+)(out) + L-aspartate(in) + 3 Na(+)(in) + H(+)(in). It catalyses the reaction D-aspartate(out) + K(+)(in) + 3 Na(+)(out) + H(+)(out) = D-aspartate(in) + K(+)(out) + 3 Na(+)(in) + H(+)(in). Its function is as follows. Sodium-dependent, high-affinity amino acid transporter that mediates the uptake of L-glutamate and also L-aspartate and D-aspartate. Functions as a symporter that transports one amino acid molecule together with two or three Na(+) ions and one proton, in parallel with the counter-transport of one K(+) ion. Acts primarily as an inhibitory glutamate-gated chloride channel being a major inhibitory presynaptic receptor at mammalian rod bipolar cell axon terminals. Glutamate binding gates a large Cl(-) conductance that mediates inhibition, affecting visual processing in the retina. This is Excitatory amino acid transporter 5 from Homo sapiens (Human).